The following is a 708-amino-acid chain: DNA ligase 2 (708 aa).

Residues 71–75, 121–122, and Glu153 contribute to the NAD(+) site; these read DADYD and SL. The N6-AMP-lysine intermediate role is filled by Lys155. The NAD(+) site is built by Arg176, Glu213, Lys330, and Lys354. Zn(2+) is bound by residues Cys448, Cys451, Cys466, and Cys471. One can recognise a BRCT domain in the interval 627–708; it reads ADAGTLAGKE…LLRLAEAAPE (82 aa).

It belongs to the NAD-dependent DNA ligase family. LigA subfamily. Mg(2+) is required as a cofactor. The cofactor is Mn(2+).

It carries out the reaction NAD(+) + (deoxyribonucleotide)n-3'-hydroxyl + 5'-phospho-(deoxyribonucleotide)m = (deoxyribonucleotide)n+m + AMP + beta-nicotinamide D-nucleotide.. Its function is as follows. DNA ligase that catalyzes the formation of phosphodiester linkages between 5'-phosphoryl and 3'-hydroxyl groups in double-stranded DNA using NAD as a coenzyme and as the energy source for the reaction. It is essential for DNA replication and repair of damaged DNA. This is DNA ligase 2 from Opitutus terrae (strain DSM 11246 / JCM 15787 / PB90-1).